A 968-amino-acid polypeptide reads, in one-letter code: AP2-associated protein kinase 1 (968 aa).

N-acetylmethionine is present on Met1. Over residues Met1 to Gln11 the composition is skewed to basic and acidic residues. Residues Met1–Gly25 are disordered. Residues Gly12 to Gly25 show a composition bias toward gly residues. Phosphoserine is present on Ser14. Positions Val46 to Leu315 constitute a Protein kinase domain. Residues Leu52–Val60 and Lys74 contribute to the ATP site. Residue Asp176 is the Proton acceptor of the active site. Position 234 is a phosphotyrosine (Tyr234). Ser235 carries the post-translational modification Phosphoserine. 2 disordered regions span residues Ser327–Pro485 and Ile578–Arg640. A phosphothreonine mark is found at Thr354 and Thr389. An Omega-N-methylarginine modification is found at Arg391. A compositionally biased stretch (pro residues) spans Gln437–Ala448. 2 stretches are compositionally biased toward low complexity: residues Pro449–Gln472 and Ile578–Ser589. Thr613 bears the Phosphothreonine mark. Ser625 is subject to Phosphoserine. The residue at position 627 (Thr627) is a Phosphothreonine. Phosphoserine is present on residues Ser630, Ser631, Ser644, and Ser657. At Thr660 the chain carries Phosphothreonine. The segment at Ser671–Asp708 is disordered. Over residues Thr679 to Asn703 the composition is skewed to polar residues. Tyr694 is modified (phosphotyrosine). Ser738, Ser853, Ser944, and Ser945 each carry phosphoserine. A clathrin-binding domain (CBD) region spans residues Glu830–Asp967. Disordered regions lie at residues Leu843–Arg862 and Pro929–Leu952. The segment covering Leu851 to Arg862 has biased composition (polar residues). Residues Gly938–Ser951 are compositionally biased toward low complexity.

This sequence belongs to the protein kinase superfamily. Ser/Thr protein kinase family. As to quaternary structure, interacts (via CBD domain) with clathrin. Interacts with AP-2 complex. Interacts with NUMB. Interacts with alpha-adaptin. Interacts with EPS15. Interacts with membrane-bound activated NOTCH1 but not with the inactive full-length form of NOTCH1. Preferentially interacts with monoubiquitinated activated NOTCH1 compared to the non-ubiquitinated form. Post-translationally, autophosphorylated.

The protein resides in the cell membrane. It localises to the membrane. Its subcellular location is the clathrin-coated pit. It is found in the presynapse. The catalysed reaction is L-seryl-[protein] + ATP = O-phospho-L-seryl-[protein] + ADP + H(+). It catalyses the reaction L-threonyl-[protein] + ATP = O-phospho-L-threonyl-[protein] + ADP + H(+). With respect to regulation, stimulated by clathrin. Its function is as follows. Regulates clathrin-mediated endocytosis by phosphorylating the AP2M1/mu2 subunit of the adaptor protein complex 2 (AP-2) which ensures high affinity binding of AP-2 to cargo membrane proteins during the initial stages of endocytosis. Preferentially, may phosphorylate substrates on threonine residues. Regulates phosphorylation of other AP-2 subunits as well as AP-2 localization and AP-2-mediated internalization of ligand complexes. Phosphorylates NUMB and regulates its cellular localization, promoting NUMB localization to endosomes. Binds to and stabilizes the activated form of NOTCH1, increases its localization in endosomes and regulates its transcriptional activity. This Sus scrofa (Pig) protein is AP2-associated protein kinase 1 (AAK1).